Reading from the N-terminus, the 236-residue chain is MATPHINAQPGDFAETVLMPGDPLRAKYIAETFLEDVKQVCDVRNMFGFTGTYKGKKVSVMGHGMGIPSACIYVHELIAEYGVKNVIRVGSCGAVRDDVNLMDVVIGMGASTDSKVNRIRFNDHDFAALADYGLLEEAVKQARAQNVPVKVGNVFSADLFYTPEADIFEKMEKLGILGVDMEAAGIYGVAADLKAKALTILTVSDHIIRGEKLSSEDRQKSFNDMMKVALETAINL.

A purine D-ribonucleoside is bound at residue H5. Phosphate contacts are provided by residues G21, R25, R44, and 88 to 91 (RVGS). Residues 180-182 (DME) and 204-205 (SD) contribute to the a purine D-ribonucleoside site. Catalysis depends on D205, which acts as the Proton donor.

The protein belongs to the PNP/UDP phosphorylase family. As to quaternary structure, homohexamer; trimer of homodimers.

It catalyses the reaction a purine D-ribonucleoside + phosphate = a purine nucleobase + alpha-D-ribose 1-phosphate. It carries out the reaction a purine 2'-deoxy-D-ribonucleoside + phosphate = a purine nucleobase + 2-deoxy-alpha-D-ribose 1-phosphate. Catalyzes the reversible phosphorolytic breakdown of the N-glycosidic bond in the beta-(deoxy)ribonucleoside molecules, with the formation of the corresponding free purine bases and pentose-1-phosphate. This Vibrio vulnificus (strain CMCP6) protein is Purine nucleoside phosphorylase DeoD-type 2.